The primary structure comprises 379 residues: L-lactate dehydrogenase (379 aa).

Positions 1–379 (MIISASTDYR…LSRDSLVKIP (379 aa)) constitute an FMN hydroxy acid dehydrogenase domain. Residue Tyr24 coordinates substrate. FMN contacts are provided by Ser106 and Gln127. Tyr129 contacts substrate. Thr155 is a binding site for FMN. Arg164 contributes to the substrate binding site. Lys251 serves as a coordination point for FMN. His275 (proton acceptor) is an active-site residue. Position 278 (Arg278) interacts with substrate. An FMN-binding site is contributed by 306–330 (DSGIRTGLDVVRMLALGADCTLLGR).

Belongs to the FMN-dependent alpha-hydroxy acid dehydrogenase family. The cofactor is FMN.

It is found in the cell inner membrane. The catalysed reaction is (S)-lactate + A = pyruvate + AH2. Its function is as follows. Catalyzes the conversion of L-lactate to pyruvate. Is coupled to the respiratory chain. This chain is L-lactate dehydrogenase, found in Vibrio parahaemolyticus serotype O3:K6 (strain RIMD 2210633).